A 1150-amino-acid polypeptide reads, in one-letter code: Solute carrier family 12 member 6 (1150 aa).

A disordered region spans residues 1 to 108 (MHPPEATTKM…GEHSQLLDDG (108 aa)). Topologically, residues 1–135 (MHPPEATTKM…DEYFDKNLAL (135 aa)) are cytoplasmic. A compositionally biased stretch (low complexity) spans 28–45 (LSDTSPDLSSRSSSRVRF). Serine 32 carries the phosphoserine modification. Positions 80–101 (DRTSNPQDVTEDPSQNSITGEH) are enriched in polar residues. Serine 120 carries the phosphoserine modification. Residues 136–158 (FEEEMDTRPKVSSLLNRMANYTN) traverse the membrane as a discontinuously helical segment. Positions 147 and 148 each coordinate K(+). At serine 148 the chain carries Phosphoserine. Residue asparagine 151 participates in chloride binding. The Extracellular portion of the chain corresponds to 159 to 165 (LTQGAKE). The tract at residues 161 to 181 (QGAKEHEEAENITEGKKKPTK) is disordered. The span at 163-177 (AKEHEEAENITEGKK) shows a compositional bias: basic and acidic residues. Residues 166-188 (HEEAENITEGKKKPTKSPQMGTF) form a helical membrane-spanning segment. Over 189–211 (MGVYLPCLQNIFGVILFLRLTWV) the chain is Cytoplasmic. The helical transmembrane segment at 212–245 (VGTAGILQAFAIVLICCCCTMLTAISMSAIATNG) threads the bilayer. Topologically, residues 246 to 263 (VVPAGGSYFMISRALGPE) are extracellular. 2 helical membrane-spanning segments follow: residues 264 to 287 (FGGAVGLCFYLGTTFAAAMYILGA) and 288 to 316 (IEIFLVYIVPRAAIFRSDDALKESAAMLN). Residue tyrosine 283 coordinates K(+). The Extracellular portion of the chain corresponds to 317–433 (NMRVYGTAFL…FVHNNVISIQ (117 aa)). Cysteine 375 and cysteine 390 are joined by a disulfide. 4 N-linked (GlcNAc...) asparagine glycosylation sites follow: asparagine 379, asparagine 398, asparagine 411, and asparagine 417. A disulfide bond links cysteine 410 and cysteine 420. A helical membrane pass occupies residues 434 to 454 (GIPGLASGIITENLWSNYLPK). 3 residues coordinate K(+): isoleucine 443, threonine 444, and asparagine 446. Residues isoleucine 443 and threonine 444 each contribute to the chloride site. Residues leucine 447 and tryptophan 448 each coordinate chloride. Residues 455–464 (GEIIEKPSAK) are Cytoplasmic-facing. A helical membrane pass occupies residues 465-487 (SSDVLGNLNHEYVLADITTSFTL). The Extracellular portion of the chain corresponds to 488–518 (LVGIFFPSVTGIMAGSNRSGDLKDAQKSIPI). Threonine 497 provides a ligand contact to K(+). The helical transmembrane segment at 519–545 (GTILAILTTSFVYLSNVVLFGACIEGV) threads the bilayer. The Cytoplasmic segment spans residues 546 to 568 (VLRDKFGDAVKGNLVVGTLSWPS). 2 helical membrane-spanning segments follow: residues 569-589 (PWVIVIGSFFSTCGAGLQSLT) and 590-612 (GAPRLLQAIAKDNIIPFLRVFGH). Isoleucine 603 is a binding site for chloride. Residues 613 to 629 (SKANGEPTWALLLTAAI) lie on the Cytoplasmic side of the membrane. The next 2 membrane-spanning stretches (helical) occupy residues 630-649 (AELGILIASLDLVAPILSMF) and 650-665 (FLMCYLFVNLACALQT). A chloride-binding site is contributed by tyrosine 654. Residues 666-1150 (LLRTPNWRPR…GGSEVITIYS (485 aa)) are Cytoplasmic-facing. The segment at 682-691 (ALSFMGMSIC) is scissor helix. Residue serine 736 is modified to Phosphoserine. At threonine 778 the chain carries Phosphothreonine. Serine 981 bears the Phosphoserine mark. Phosphothreonine is present on threonine 991. Residues serine 1023, serine 1029, and serine 1032 each carry the phosphoserine modification. Position 1048 is a phosphothreonine (threonine 1048). A Phosphotyrosine modification is found at tyrosine 1121.

The protein belongs to the SLC12A transporter family. K/Cl co-transporter subfamily. As to quaternary structure, homodimer; adopts a domain-swap conformation at the scissor helices connecting the transmembrane domain and C-terminal domain. Heterodimer with K-Cl cotransporter SLC12A5. Interacts (via C-terminus) with CKB; the interaction may be required for potassium-chloride cotransport activity. Post-translationally, phosphorylated, phosphorylation regulates transporter activity. Phosphorylated at Thr-991 and Thr-1048 by OXSR1/OSR1 and STK39/SPAK downstream of WNK kinases (WNK1, WNK2, WNK3 or WNK4), inhibiting the potassium-chloride cotransport activity. N-glycosylated. As to expression, expressed in hippocampus and corpus callosum (at protein level). Highly expressed throughout the brain and detected at lower levels in kidney. Highly expressed in highly myelinated white matter of the brain, but not in gray matter. Detected in the corpus callosum, in packed cell layers of the hippocampus and in Purkinje neurons within the cerebellum. Highly expressed in white matter in the spinal cord, but not in dorsal root ganglia or sciatic nerve. Colocalizes with the oligodendrocyte marker CNP. Expressed in hippocampus in CA1, and to a lesser extent CA3 pyramidal cells. Also expressed in cortex, mostly in large neurons and in the large cerebellar Purkinje cells. Highly expressed in kidney, but not detected in brain.

It localises to the cell membrane. The protein resides in the basolateral cell membrane. The catalysed reaction is K(+)(in) + chloride(in) = K(+)(out) + chloride(out). Inhibited following phosphorylation by OXSR1/OSR1 and STK39/SPAK: phosphorylation takes place downstream of WNK kinases (WNK1, WNK2, WNK3 or WNK4) in response to hyperosmotic stress and subsequent cell shrinkage. In terms of biological role, mediates electroneutral potassium-chloride cotransport when activated by cell swelling. May contribute to cell volume homeostasis in single cells. Its function is as follows. Mediates electroneutral potassium-chloride cotransport when activated by cell swelling. May contribute to cell volume homeostasis in single cells. This is Solute carrier family 12 member 6 (Slc12a6) from Mus musculus (Mouse).